The following is a 218-amino-acid chain: Glutathione S-transferase U22 (218 aa).

Residue alanine 2 is modified to N-acetylalanine. The GST N-terminal domain occupies 3-82; it reads DEVILLDFWP…YIDEVWSDKN (80 aa). Residues 13 to 14, 39 to 40, 53 to 54, and 66 to 67 each bind glutathione; these read SP, DK, KI, and ES. Residues 88–208 form the GST C-terminal domain; it reads DPYQRAQARF…LHDSEKILAF (121 aa). Phosphothreonine is present on threonine 149.

The protein belongs to the GST superfamily. Tau family.

It localises to the cytoplasm. The protein resides in the cytosol. The enzyme catalyses RX + glutathione = an S-substituted glutathione + a halide anion + H(+). Functionally, may be involved in the conjugation of reduced glutathione to a wide number of exogenous and endogenous hydrophobic electrophiles and have a detoxification role against certain herbicides. The polypeptide is Glutathione S-transferase U22 (GSTU22) (Arabidopsis thaliana (Mouse-ear cress)).